We begin with the raw amino-acid sequence, 355 residues long: Ubiquinone biosynthesis protein COQ4 homolog, mitochondrial (355 aa).

Residues histidine 134, aspartate 135, histidine 138, and glutamate 150 each contribute to the Zn(2+) site.

It belongs to the COQ4 family. Component of a multi-subunit COQ enzyme complex. It depends on Zn(2+) as a cofactor.

The protein localises to the mitochondrion inner membrane. It carries out the reaction a 4-hydroxy-3-methoxy-5-(all-trans-polyprenyl)benzoate + H(+) = a 2-methoxy-6-(all-trans-polyprenyl)phenol + CO2. It participates in cofactor biosynthesis; ubiquinone biosynthesis. Functionally, lyase that catalyzes the C1-decarboxylation of 4-hydroxy-3-methoxy-5-(all-trans-polyprenyl)benzoic acid into 2-methoxy-6-(all-trans-polyprenyl)phenol during ubiquinone biosynthesis. The chain is Ubiquinone biosynthesis protein COQ4 homolog, mitochondrial from Plasmodium falciparum (isolate 3D7).